The chain runs to 215 residues: Beta-crystallin A3 (215 aa).

The residue at position 1 (M1) is an N-acetylmethionine. Residues 1–24 (METQTVQQELESLPTTKMAQTNPM) form a disordered region. Residues 1 to 30 (METQTVQQELESLPTTKMAQTNPMPGSVGP) are N-terminal arm. E2 is modified (N-acetylalanine). Beta/gamma crystallin 'Greek key' domains lie at 31 to 70 (WKIT…KVEC) and 71 to 117 (GAWV…RPIC). C82 and C117 each carry S-glutathionyl cysteine; alternate. S-methylcysteine; alternate occurs at positions 82 and 117. The connecting peptide stretch occupies residues 118–123 (SANHKE). 2 Beta/gamma crystallin 'Greek key' domains span residues 124-165 (SKIT…KIQC) and 166-214 (GAWV…RRIQ).

The protein belongs to the beta/gamma-crystallin family. As to quaternary structure, homo/heterodimer, or complexes of higher-order. The structure of beta-crystallin oligomers seems to be stabilized through interactions between the N-terminal arms. Interacts with CRYBA1. Post-translationally, specific cleavages in the N-terminal arm occur during lens maturation and give rise to several truncated forms. In terms of processing, isoform A1 contains a N-acetylalanine at position 2.

Functionally, crystallins are the dominant structural components of the vertebrate eye lens. The protein is Beta-crystallin A3 of Bos taurus (Bovine).